We begin with the raw amino-acid sequence, 126 residues long: Large ribosomal subunit protein uL22 (126 aa).

It belongs to the universal ribosomal protein uL22 family. Part of the 50S ribosomal subunit.

Functionally, this protein binds specifically to 23S rRNA; its binding is stimulated by other ribosomal proteins, e.g. L4, L17, and L20. It is important during the early stages of 50S assembly. It makes multiple contacts with different domains of the 23S rRNA in the assembled 50S subunit and ribosome. Its function is as follows. The globular domain of the protein is located near the polypeptide exit tunnel on the outside of the subunit, while an extended beta-hairpin is found that lines the wall of the exit tunnel in the center of the 70S ribosome. In Paracoccus denitrificans (strain Pd 1222), this protein is Large ribosomal subunit protein uL22.